Consider the following 385-residue polypeptide: ELAV-like protein 4 (385 aa).

Residues 12–48 (TMEPQVSNGPTSNTSNGPSSNNRNCPSPMQTGAATDD) are disordered. A compositionally biased stretch (low complexity) spans 18–33 (SNGPTSNTSNGPSSNN). The segment covering 34-44 (RNCPSPMQTGA) has biased composition (polar residues). Ser38 is subject to Phosphoserine. RRM domains are found at residues 51–129 (TNLI…YARP) and 137–217 (ANLY…FANN). Ser233 carries the post-translational modification Phosphoserine. Asymmetric dimethylarginine; by CARM1; alternate is present on Arg248. Omega-N-methylarginine; by CARM1; alternate is present on Arg248. Residues 302-380 (WCIFVYNLSP…RVLQVSFKTN (79 aa)) form the RRM 3 domain.

The protein belongs to the RRM elav family. As to quaternary structure, component of a TAU mRNP complex, at least composed of IGF2BP1, ELAVL4 and G3BP. Associates with the EIF4F cap-binding complex, composed of EIF4G, EIF4A, EIF4E and PABP. Within the EIF4F cap-binding complex, interacts with EIF4A. Interacts with SMN (via Tudor domain) in an RNA-independent manner; the interaction is required for localization of ELAVL4 to RNA granules. Interacts with MAP1 light chain LC1 (via C-terminus); the interaction contributes to the association of ELAVL4 with microtubules. Interacts with MAP1 light chain LC2. In terms of processing, methylated by CARM1, which leads to reduced RNA-binding activity and enhanced interaction with SMN. Methylation at Arg-248 by CARM1 weakens protective binding to the 3'UTR of CDKN1A mRNA and down-regulates CDKN1A protein expression, thereby maintaining cells in a proliferative state. Methylation is inhibited by NGF, which facilitates neurite outgrowth. As to expression, expressed in the brain, including the hippocampus, and in pancreatic beta cells (at protein level). Expressed in pyramidal neurons of the hippocampal CA3 and CA1 region and in the hilus but not in dentate granule cells (at protein level). Expressed in the dorsal root ganglion and the spinal cord (at protein level). Expressed in neural stem and progenitor cells (at protein level). Expressed in radial glia-like cells and in transient amplifying cells in the subventricular zone (SVZ), and in immature neurons both in the SVZ and the rostral migratory stream as well as in mature neurons in the olfactory bulb (at protein level). Expressed in testis and in the brain, including the hippocampus, the neocortex and the cerebellum. Expressed in lower- but not upper-layer primary neurons of the mature neocortex, in the hippocampal regions CA1-3 and the dentate gyrus. Expressed in the mitral and granule cells of the olfactory bulb, cerebral cortex, entorhinal cortex, thalamus, medial habenula, amygdala, granule cells of the cerebellum, pons, olivary nucleus, dorsal and ventral spinal cord and in dorsal root ganglia. Expressed in motor neurons. Isoform 4: Expressed in the brain. Isoform 5: Expressed in the brain. Isoform 6: Expressed in the brain. Isoform 7: Expressed in the brain. Isoform 8: Expressed in the brain. Isoform 9: Expressed in the brain. Isoform 10: Expressed in the brain. Isoform 11: Expressed in the brain.

Its subcellular location is the cytoplasm. The protein localises to the perikaryon. It is found in the cell projection. It localises to the dendrite. The protein resides in the axon. Its subcellular location is the growth cone. RNA-binding protein that is involved in the post-transcriptional regulation of mRNAs. Plays a role in the regulation of mRNA stability, alternative splicing and translation. Binds to AU-rich element (ARE) sequences in the 3' untranslated region (3'UTR) of target mRNAs, including GAP43, VEGF, FOS, CDKN1A and ACHE mRNA. Many of the target mRNAs are coding for RNA-binding proteins, transcription factors and proteins involved in RNA processing and/or neuronal development and function. By binding to the mRNA 3'UTR, decreases mRNA deadenylation and thereby contributes to the stabilization of mRNA molecules and their protection from decay. Also binds to the polyadenylated (poly(A)) tail in the 3'UTR of mRNA, thereby increasing its affinity for mRNA binding. Mainly plays a role in neuron-specific RNA processing by stabilization of mRNAs such as GAP43, ACHE and mRNAs of other neuronal proteins, thereby contributing to the differentiation of neural progenitor cells, nervous system development, learning and memory mechanisms. Involved in the negative regulation of the proliferative activity of neuronal stem cells and in the positive regulation of neuronal differentiation of neural progenitor cells. Promotes neuronal differentiation of neural stem/progenitor cells in the adult subventricular zone of the hippocampus by binding to and stabilizing SATB1 mRNA. Binds and stabilizes MSI1 mRNA in neural stem cells. Exhibits increased binding to ACHE mRNA during neuronal differentiation, thereby stabilizing ACHE mRNA and enhancing its expression. Protects CDKN1A mRNA from decay by binding to its 3'-UTR. May bind to APP and BACE1 mRNAS and the BACE1AS lncRNA and enhance their stabilization. Plays a role in neurite outgrowth and in the establishment and maturation of dendritic arbors, thereby contributing to neocortical and hippocampal circuitry function. Stabilizes GAP43 mRNA and protects it from decay during postembryonic development in the brain. By promoting the stabilization of GAP43 mRNA, plays a role in NGF-mediated neurite outgrowth. Binds to BDNF long 3'UTR mRNA, thereby leading to its stabilization and increased dendritic translation after activation of PKC. By increasing translation of BDNF after nerve injury, may contribute to nerve regeneration. Acts as a stabilizing factor by binding to the 3'UTR of NOVA1 mRNA, thereby increasing its translation and enhancing its functional activity in neuron-specific splicing. Stimulates translation of mRNA in a poly(A)- and cap-dependent manner, possibly by associating with the EIF4F cap-binding complex. May also negatively regulate translation by binding to the 5'UTR of Ins2 mRNA, thereby repressing its translation. Upon glucose stimulation, Ins2 mRNA is released from ELAVL4 and translational inhibition is abolished. Also plays a role in the regulation of alternative splicing. May regulate alternative splicing of CALCA pre-mRNA into Calcitonin and Calcitonin gene-related peptide 1 (CGRP) by competing with splicing regulator TIAR for binding to U-rich sequences of CALCA pre-mRNA. This chain is ELAV-like protein 4 (Elavl4), found in Mus musculus (Mouse).